Reading from the N-terminus, the 544-residue chain is Methionine--tRNA ligase 2 (544 aa).

Positions 10-20 match the 'HIGH' region motif; it reads PYANGSLHLGH. 4 residues coordinate Zn(2+): Cys141, Cys144, Cys153, and Cys156. The 'KMSKS' region signature appears at 329-333; the sequence is KLSTS. Thr332 serves as a coordination point for ATP.

The protein belongs to the class-I aminoacyl-tRNA synthetase family. MetG type 1 subfamily. Monomer. It depends on Zn(2+) as a cofactor.

It is found in the cytoplasm. It carries out the reaction tRNA(Met) + L-methionine + ATP = L-methionyl-tRNA(Met) + AMP + diphosphate. Functionally, is required not only for elongation of protein synthesis but also for the initiation of all mRNA translation through initiator tRNA(fMet) aminoacylation. The polypeptide is Methionine--tRNA ligase 2 (Bacillus cereus (strain ATCC 14579 / DSM 31 / CCUG 7414 / JCM 2152 / NBRC 15305 / NCIMB 9373 / NCTC 2599 / NRRL B-3711)).